Reading from the N-terminus, the 513-residue chain is Histidine ammonia-lyase (513 aa).

The 5-imidazolinone (Ala-Gly) cross-link spans 144–146; the sequence is ASG. At serine 145 the chain carries 2,3-didehydroalanine (Ser).

This sequence belongs to the PAL/histidase family. Contains an active site 4-methylidene-imidazol-5-one (MIO), which is formed autocatalytically by cyclization and dehydration of residues Ala-Ser-Gly.

The protein localises to the cytoplasm. The catalysed reaction is L-histidine = trans-urocanate + NH4(+). The protein operates within amino-acid degradation; L-histidine degradation into L-glutamate; N-formimidoyl-L-glutamate from L-histidine: step 1/3. The sequence is that of Histidine ammonia-lyase from Streptococcus pyogenes serotype M5 (strain Manfredo).